The sequence spans 313 residues: Nucleoside diphosphate-linked moiety X motif 6 (313 aa).

One can recognise a Nudix hydrolase domain in the interval threonine 138–tyrosine 270.

The protein belongs to the Nudix hydrolase family. In terms of assembly, monomer and homodimer.

The protein localises to the cytoplasm. It is found in the nucleus. Its subcellular location is the mitochondrion. In terms of biological role, may contribute to the regulation of cell proliferation. This is Nucleoside diphosphate-linked moiety X motif 6 (Nudt6) from Mus musculus (Mouse).